The following is a 578-amino-acid chain: E3 ubiquitin-protein ligase Praja-1 (578 aa).

Residues 1 to 298 (MSHQERIASQ…KVPRRRRTMA (298 aa)) form a disordered region. 2 stretches are compositionally biased toward basic and acidic residues: residues 57–67 (DYSRYPPREYR) and 107–116 (KFKDDPEKGA). A compositionally biased stretch (polar residues) spans 151 to 163 (SKQNGSSASQISS). Thr-231 carries the phosphothreonine modification. Basic and acidic residues-rich tracts occupy residues 243 to 264 (RWRD…RGRG) and 273 to 290 (RYAE…ADKV). Phosphoserine occurs at positions 317 and 319. A disordered region spans residues 332 to 397 (RSREQPQSSS…QASLEEGEIP (66 aa)). The span at 359–373 (AGAGSLASAGSNGSG) shows a compositional bias: low complexity. A compositionally biased stretch (acidic residues) spans 377-395 (EVQDPSLQEEEQASLEEGE). The RING-type zinc finger occupies 530 to 571 (CPICCSEYVKGEVATELPCHHYFHKPCVSIWLQKSGTCPVCR).

Binds ubiquitin-conjugating enzymes (E2s). Binds, in vitro and in vivo, the MAGE conserved domain of MAGED1. Binds weakly Necdin, in vitro. Interacts with UBE2D2. Substrate for E2-dependent ubiquitination. In terms of tissue distribution, expressed in brain, liver, kidney. Highest levels in brain where it is found in many regions including cortical and subcortical areas and in neurons of the amygdala. Weak expression also found in testis. Also expressed in developing embryo.

It catalyses the reaction S-ubiquitinyl-[E2 ubiquitin-conjugating enzyme]-L-cysteine + [acceptor protein]-L-lysine = [E2 ubiquitin-conjugating enzyme]-L-cysteine + N(6)-ubiquitinyl-[acceptor protein]-L-lysine.. Functionally, has E2-dependent E3 ubiquitin-protein ligase activity. Ubiquitinates MAGED1 antigen leading to its subsequent degradation by proteasome. May be involved in protein sorting. The protein is E3 ubiquitin-protein ligase Praja-1 (Pja1) of Mus musculus (Mouse).